Consider the following 308-residue polypeptide: tRNA dimethylallyltransferase (308 aa).

ATP is bound at residue 14–21 (GPTASGKT). 16–21 (TASGKT) is a binding site for substrate. 3 interaction with substrate tRNA regions span residues 39–42 (DSAL), 163–167 (QRLAR), and 244–249 (RCVGYR).

Belongs to the IPP transferase family. Monomer. Mg(2+) is required as a cofactor.

The enzyme catalyses adenosine(37) in tRNA + dimethylallyl diphosphate = N(6)-dimethylallyladenosine(37) in tRNA + diphosphate. Its function is as follows. Catalyzes the transfer of a dimethylallyl group onto the adenine at position 37 in tRNAs that read codons beginning with uridine, leading to the formation of N6-(dimethylallyl)adenosine (i(6)A). This chain is tRNA dimethylallyltransferase, found in Shewanella piezotolerans (strain WP3 / JCM 13877).